We begin with the raw amino-acid sequence, 138 residues long: MLIPRRVKHRKQHHPGRSGQATGGTKVSFGEYGIQALTPAYVTNRQIESARIAMTRHIKRGGKVWINIYPDRPLTKKPAETRMGSGKGSPEWWIANVKPGRVLFELSGVNEEVAREALRLAIHKLPLKARIVRREGGE.

Positions 1 to 16 are enriched in basic residues; sequence MLIPRRVKHRKQHHPG. The interval 1 to 25 is disordered; sequence MLIPRRVKHRKQHHPGRSGQATGGT.

This sequence belongs to the universal ribosomal protein uL16 family. In terms of assembly, part of the 50S ribosomal subunit.

Binds 23S rRNA and is also seen to make contacts with the A and possibly P site tRNAs. In Renibacterium salmoninarum (strain ATCC 33209 / DSM 20767 / JCM 11484 / NBRC 15589 / NCIMB 2235), this protein is Large ribosomal subunit protein uL16.